The chain runs to 396 residues: Beta-peptidyl aminopeptidase BapA (396 aa).

Positions 1–21 (MHYLKFPAIIAGMLLAGAASA) are cleaved as a signal peptide. Residue Ser271 is the Nucleophile of the active site. Catalysis depends on proton donor/acceptor residues Ser309 and Asp311.

It belongs to the peptidase S58 family. In terms of assembly, heterooctamer of 4 heterodimers ((alpha:beta)4); each heterodimer is composed of an alpha subunit and a beta subunit processed from the same precursor. In terms of processing, autoproteolytic processing to generate the alpha and beta subunit is required for self-activation and is proposed to use a similar mechanism as substrate cleavage.

It localises to the periplasm. It catalyses the reaction Cleaves N-terminal beta-homoamino acids from peptides composed of 2 to 6 amino acids.. Inhibited by AEBSF (4-(2-aminoethyl)benzenesulfonyl fluoride, Pefabloc SC). Beta-aminopeptidase that can cleave synthetic beta-peptides which consist of backbone-elongated beta-amino acid residues that are not processed by common proteolytic enzymes. Can cleave the beta-peptides beta-homoVal-beta-homoAla-beta-homoLeu and beta-homoAla-beta-homoLeu. Requires a beta-amino acid at the N-terminus of peptide substrates and cleaves the peptide bond between the N-terminal beta-amino acid and the amino acid at the second position of tripeptidic substrates of the general structure H-betahXaa-Ile-betahTyr-OH according to the following preferences with regard to the side chain of the N-terminal beta-amino acid: aliphatic and aromatic &gt; OH-containing &gt; hydrogen, basic and polar. beta-homoVal-beta-homoAla-beta-homoLeu and beta-homoAla-beta-homoLeu. This is Beta-peptidyl aminopeptidase BapA from Sphingosinicella microcystinivorans.